The sequence spans 237 residues: 1-(5-phosphoribosyl)-5-[(5-phosphoribosylamino)methylideneamino] imidazole-4-carboxamide isomerase (237 aa).

Asp-8 acts as the Proton acceptor in catalysis. Asp-127 serves as the catalytic Proton donor.

This sequence belongs to the HisA/HisF family.

Its subcellular location is the cytoplasm. The enzyme catalyses 1-(5-phospho-beta-D-ribosyl)-5-[(5-phospho-beta-D-ribosylamino)methylideneamino]imidazole-4-carboxamide = 5-[(5-phospho-1-deoxy-D-ribulos-1-ylimino)methylamino]-1-(5-phospho-beta-D-ribosyl)imidazole-4-carboxamide. The protein operates within amino-acid biosynthesis; L-histidine biosynthesis; L-histidine from 5-phospho-alpha-D-ribose 1-diphosphate: step 4/9. The protein is 1-(5-phosphoribosyl)-5-[(5-phosphoribosylamino)methylideneamino] imidazole-4-carboxamide isomerase of Sulfurovum sp. (strain NBC37-1).